The chain runs to 901 residues: MTTQLNINSVIENAKRVITPLSPISIFAARNPWEGLEADTFEDVAKWLRDVRDVDIFPNKALIESAVARGELDESVFNQLVTDMLLEHHYNIPQHYINLYIDNIKTLKDVPASYMNHSNVDVVADLLLEKSKRDMADSYHHYDVRPMSDAIIDEQGEPLSEQVNRQMIKWTKLYIDQFLSSWTMPKREQSFYHAWLHLAQHDHSFTKAQRQVIKGLPNDPKMTIESVLTHFSIDQEDYQAYVEGHLLALPGWAGMLYYRSQQHHFEQHLLTDYLAIRLVVEQLLVGDEFKSVTKDCESRSENWFKQTVASWCYYSDMPSDVLLQHDVNEIQTFIHFAATMNKNVFKNLWLIAWEMTYESQLKQKIKAGHESVAGALDVNQVNVSENDNANQPHSVLLNDTQAVDENNSELNQVGTSTKAQIAFCIDVRSEPFRRHIEAAGPFETIGIAGFFGLPIQKDAVDEQFKHDSLPVMVPPAYRIKEFADRYDMNVYRQQQQTMSSMFYTFKLMKNNVMPSLLLPELSGPFLSLSTIVNSIMPRKSRASLQKITQKWLKKPETKLTIDREFDRTSDLPVGFTEQEQIDFALQALKLMDLTEAFAPFVVLAGHASHSHNNPHHASLECGACGGASSGFNAKLLAMICNRPNVRQGLKQSGVYIPETTVFAAAEHHTSTDTLAWVYVPDTLSSIALDAYESLNDAMPMISEHANRERLDKLPTIGRVNHPVEEAQRFASDWSEVRPEWGLAKNASFIIGRRQLTKGIDLEGRTFLHNYDWRKDKDGKLLNTIISGPALVAQWINLQYYASTVAPHFYGSGNKATQTVTSGVGVMQGNASDLMYGLSWQSVMAADRTMYHSPIRLLVVVQAPDYVVARLLANNDHFARKVSNHWLRLMSVNEEGRFKSWI.

The Zn(2+) site is built by C424, D426, H606, and C621.

This sequence belongs to the inorganic carbon transporter (TC 9.A.2) DabA family. Forms a complex with DabB. It depends on Zn(2+) as a cofactor.

It localises to the cell membrane. Functionally, part of an energy-coupled inorganic carbon pump. In Staphylococcus aureus (strain MSSA476), this protein is Probable inorganic carbon transporter subunit DabA.